The following is a 153-amino-acid chain: uncharacterized protein (153 aa).

This is an uncharacterized protein from Bacillus subtilis (strain 168).